The sequence spans 282 residues: NADPH-dependent 7-cyano-7-deazaguanine reductase (282 aa).

A substrate-binding site is contributed by 88-90 (IES). An NADPH-binding site is contributed by 90 to 91 (SK). The active-site Thioimide intermediate is the Cys-190. Asp-197 functions as the Proton donor in the catalytic mechanism. Substrate is bound at residue 229–230 (HE). 258 to 259 (RG) lines the NADPH pocket.

It belongs to the GTP cyclohydrolase I family. QueF type 2 subfamily. In terms of assembly, homodimer.

The protein localises to the cytoplasm. It catalyses the reaction 7-aminomethyl-7-carbaguanine + 2 NADP(+) = 7-cyano-7-deazaguanine + 2 NADPH + 3 H(+). It participates in tRNA modification; tRNA-queuosine biosynthesis. Functionally, catalyzes the NADPH-dependent reduction of 7-cyano-7-deazaguanine (preQ0) to 7-aminomethyl-7-deazaguanine (preQ1). This Escherichia coli O81 (strain ED1a) protein is NADPH-dependent 7-cyano-7-deazaguanine reductase.